The primary structure comprises 271 residues: Type III pantothenate kinase (271 aa).

Position 6 to 13 (6 to 13 (DVRNTHTV)) interacts with ATP. Residue 109–112 (GADR) coordinates substrate. Residue D111 is the Proton acceptor of the active site. D131 contributes to the K(+) binding site. S134 contributes to the ATP binding site. T186 contacts substrate.

The protein belongs to the type III pantothenate kinase family. Homodimer. It depends on NH4(+) as a cofactor. K(+) serves as cofactor.

The protein localises to the cytoplasm. The enzyme catalyses (R)-pantothenate + ATP = (R)-4'-phosphopantothenate + ADP + H(+). Its pathway is cofactor biosynthesis; coenzyme A biosynthesis; CoA from (R)-pantothenate: step 1/5. In terms of biological role, catalyzes the phosphorylation of pantothenate (Pan), the first step in CoA biosynthesis. This chain is Type III pantothenate kinase, found in Mycolicibacterium vanbaalenii (strain DSM 7251 / JCM 13017 / BCRC 16820 / KCTC 9966 / NRRL B-24157 / PYR-1) (Mycobacterium vanbaalenii).